The sequence spans 357 residues: Alanine racemase (357 aa).

K35 functions as the Proton acceptor; specific for D-alanine in the catalytic mechanism. Residue K35 is modified to N6-(pyridoxal phosphate)lysine. R128 contributes to the substrate binding site. Catalysis depends on Y254, which acts as the Proton acceptor; specific for L-alanine. M302 is a substrate binding site.

It belongs to the alanine racemase family. Pyridoxal 5'-phosphate serves as cofactor.

It catalyses the reaction L-alanine = D-alanine. Its pathway is amino-acid biosynthesis; D-alanine biosynthesis; D-alanine from L-alanine: step 1/1. Its function is as follows. Catalyzes the interconversion of L-alanine and D-alanine. May also act on other amino acids. The chain is Alanine racemase (alr) from Marinobacter nauticus (strain ATCC 700491 / DSM 11845 / VT8) (Marinobacter aquaeolei).